Here is a 171-residue protein sequence, read N- to C-terminus: Large ribosomal subunit protein uL10 (171 aa).

This sequence belongs to the universal ribosomal protein uL10 family. As to quaternary structure, part of the ribosomal stalk of the 50S ribosomal subunit. The N-terminus interacts with L11 and the large rRNA to form the base of the stalk. The C-terminus forms an elongated spine to which L12 dimers bind in a sequential fashion forming a multimeric L10(L12)X complex.

In terms of biological role, forms part of the ribosomal stalk, playing a central role in the interaction of the ribosome with GTP-bound translation factors. In Paracoccus denitrificans (strain Pd 1222), this protein is Large ribosomal subunit protein uL10.